The following is a 148-amino-acid chain: Large ribosomal subunit protein bL9 (148 aa).

This sequence belongs to the bacterial ribosomal protein bL9 family.

Binds to the 23S rRNA. The polypeptide is Large ribosomal subunit protein bL9 (Bacillus cytotoxicus (strain DSM 22905 / CIP 110041 / 391-98 / NVH 391-98)).